The primary structure comprises 209 residues: Pyridoxine/pyridoxamine 5'-phosphate oxidase (209 aa).

Substrate-binding positions include 7 to 10 and Lys64; that span reads REDY. Residues 59–64, 74–75, Arg80, and Lys81 each bind FMN; these read RIVLLK and FT. Positions 121, 125, and 129 each coordinate substrate. FMN contacts are provided by residues 138–139 and Trp182; that span reads QS. 188 to 190 is a substrate binding site; it reads RLH. Residue Arg192 coordinates FMN.

This sequence belongs to the pyridoxamine 5'-phosphate oxidase family. In terms of assembly, homodimer. The cofactor is FMN.

The enzyme catalyses pyridoxamine 5'-phosphate + O2 + H2O = pyridoxal 5'-phosphate + H2O2 + NH4(+). The catalysed reaction is pyridoxine 5'-phosphate + O2 = pyridoxal 5'-phosphate + H2O2. It participates in cofactor metabolism; pyridoxal 5'-phosphate salvage; pyridoxal 5'-phosphate from pyridoxamine 5'-phosphate: step 1/1. It functions in the pathway cofactor metabolism; pyridoxal 5'-phosphate salvage; pyridoxal 5'-phosphate from pyridoxine 5'-phosphate: step 1/1. Its function is as follows. Catalyzes the oxidation of either pyridoxine 5'-phosphate (PNP) or pyridoxamine 5'-phosphate (PMP) into pyridoxal 5'-phosphate (PLP). The protein is Pyridoxine/pyridoxamine 5'-phosphate oxidase of Actinobacillus pleuropneumoniae serotype 7 (strain AP76).